Consider the following 57-residue polypeptide: Large ribosomal subunit protein bL32 (57 aa).

The span at 1–16 shows a compositional bias: basic residues; that stretch reads MAVQKSRKTPSRRGMR. The tract at residues 1-37 is disordered; the sequence is MAVQKSRKTPSRRGMRRSHDALSTTAITVDETTGELH. The span at 21–31 shows a compositional bias: polar residues; it reads ALSTTAITVDE.

The protein belongs to the bacterial ribosomal protein bL32 family.

The chain is Large ribosomal subunit protein bL32 from Hydrogenovibrio crunogenus (strain DSM 25203 / XCL-2) (Thiomicrospira crunogena).